An 84-amino-acid chain; its full sequence is MFMADAYFADTVWYVGQIIFIVAICLLVIIVVVAFLATFKLCIQLCGMCNTLGLSPSIYVFNRGRQFYEFYNDVKPPVLDVDDV.

Residues 1–18 (MFMADAYFADTVWYVGQI) lie on the Virion surface side of the membrane. The helical transmembrane segment at 19 to 39 (IFIVAICLLVIIVVVAFLATF) threads the bilayer. The Intravirion portion of the chain corresponds to 40 to 80 (KLCIQLCGMCNTLGLSPSIYVFNRGRQFYEFYNDVKPPVLD).

This sequence belongs to the betacoronaviruses E protein family. As to quaternary structure, homopentamer. Interacts with membrane protein M in the budding compartment of the host cell, which is located between endoplasmic reticulum and the Golgi complex. Interacts with Nucleoprotein.

The protein resides in the host Golgi apparatus membrane. Plays a central role in virus morphogenesis and assembly. Acts as a viroporin and self-assembles in host membranes forming pentameric protein-lipid pores that allow ion transport. Also plays a role in the induction of apoptosis. The sequence is that of Envelope small membrane protein from Bos taurus (Bovine).